Here is a 46-residue protein sequence, read N- to C-terminus: GIFSKLGRKKIKNLLISGLKNVGKEVGMDVVRTGIDIAGCKIKGEC.

An intrachain disulfide couples cysteine 40 to cysteine 46.

It belongs to the frog skin active peptide (FSAP) family. Brevinin subfamily. Expressed by the skin glands.

The protein localises to the secreted. Functionally, shows antibacterial activity against representative Gram-negative and Gram-positive bacterial species, and hemolytic activity. The sequence is that of Esculentin-1 from Pelophylax lessonae (Pool frog).